The chain runs to 196 residues: Protein TEX261 (196 aa).

5 helical membrane-spanning segments follow: residues 3–23 (FMYLLSWLSLFIQVAFITLAV), 42–62 (SRIIKYMIWFSTAVLIGLYVF), 70–90 (IGVGLFTNLVYFGLLQTFPFI), 97–117 (FILSCGLVVVNHYLACQFFAE), and 125–145 (VLAYFTFCLWIIPFAFFVSLS).

It belongs to the SVP26 family.

The protein localises to the membrane. The chain is Protein TEX261 (TEX261) from Pongo abelii (Sumatran orangutan).